We begin with the raw amino-acid sequence, 187 residues long: Cytokinin riboside 5'-monophosphate phosphoribohydrolase (187 aa).

Residue Lys74 forms an Isoglutamyl lysine isopeptide (Lys-Gln) (interchain with Q-Cter in protein Pup) linkage. Substrate is bound by residues Glu80, 98–99 (RK), 115–121 (GVGTLDE), and Thr127.

The protein belongs to the LOG family. As to quaternary structure, homodimer. Pupylated at Lys-74 by the prokaryotic ubiquitin-like protein Pup, which leads to its degradation by the proteasome. The proteasomal control of cytokinin synthesis is essential to protect M.tuberculosis against host-produced NO.

It catalyses the reaction N(6)-(dimethylallyl)adenosine 5'-phosphate + H2O = N(6)-dimethylallyladenine + D-ribose 5-phosphate. It carries out the reaction 9-ribosyl-trans-zeatin 5'-phosphate + H2O = trans-zeatin + D-ribose 5-phosphate. Functionally, catalyzes the hydrolytic removal of ribose 5'-monophosphate from nitrogen N6-modified adenosines, the final step of bioactive cytokinin synthesis. Is involved in the synthesis of isopentenyladenine (iP) and 2-methylthio-iP (2MeS-iP), the most abundant cytokinins detected in M.tuberculosis lysates and supernatants. Is also able to convert trans-zeatin-riboside monophosphate (tZRMP) to trans-zeatin (tZ) in vitro; however, it may not be involved in the biosynthesis of this minor cytokinin in vivo. Accumulation of Rv1205 sensitizes M.tuberculosis to nitric oxide since cytokinin breakdown products synergize with NO to kill M.tuberculosis. Shows a slow AMP hydrolase activity, but is not able to hydrolyze ATP. Displays no lysine decarboxylase (LDC) activity (L-lysine conversion to cadaverine). The sequence is that of Cytokinin riboside 5'-monophosphate phosphoribohydrolase from Mycobacterium tuberculosis (strain ATCC 25618 / H37Rv).